Here is a 128-residue protein sequence, read N- to C-terminus: Protein BEX1 (128 aa).

A disordered region spans residues 1–55 (MESKDQGAKNLNMENDHQKKEEKEEKPQDTIKREPVVAPTFEAGKNCAPRGGRRR). Basic and acidic residues predominate over residues 14–35 (ENDHQKKEEKEEKPQDTIKREP). Serine 105 bears the Phosphoserine; by PKB/AKT1 mark. The tract at residues 107-128 (SLRAVSTDPPHHDHHDEFCLMP) is disordered. Positions 115-128 (PPHHDHHDEFCLMP) are enriched in basic and acidic residues. Residues 117–121 (HHDHH) are his cluster. Cysteine 125 contributes to the Zn(2+) binding site.

This sequence belongs to the BEX family. As to quaternary structure, interacts with neurotrophin receptor p75NTR/NGFR. Interacts with OMP. In terms of processing, phosphorylated. Phosphorylation of Ser-105 protects it from the proteasome. Ubiquitinated. Degraded by the proteasome. In terms of tissue distribution, expressed in the central nervous system. Expressed in Schwann cells from newborn sciatic nerve.

It localises to the nucleus. The protein localises to the cytoplasm. Signaling adapter molecule involved in p75NTR/NGFR signaling. Plays a role in cell cycle progression and neuronal differentiation. Inhibits neuronal differentiation in response to nerve growth factor (NGF). May act as a link between the cell cycle and neurotrophic factor signaling, possibly by functioning as an upstream modulator of receptor signaling, coordinating biological responses to external signals with internal cellular states. In absence of reductive stress, acts as a pseudosubstrate for the CRL2(FEM1B) complex: associates with FEM1B via zinc, thereby preventing association between FEM1B and its substrates. The polypeptide is Protein BEX1 (Bex1) (Rattus norvegicus (Rat)).